Reading from the N-terminus, the 459-residue chain is ADP-specific phosphofructokinase (459 aa).

The 457-residue stretch at 1–457 (MMEFLKDFQK…FASYLSLLKR (457 aa)) folds into the ADPK domain. Mg(2+) contacts are provided by E268, E298, and D441. D441 acts as the Proton acceptor in catalysis.

The protein belongs to the carbohydrate kinase PfkC family. It depends on Mg(2+) as a cofactor.

Its subcellular location is the cytoplasm. It carries out the reaction beta-D-fructose 6-phosphate + ADP = beta-D-fructose 1,6-bisphosphate + AMP + H(+). Its pathway is carbohydrate degradation; glycolysis. In terms of biological role, catalyzes the phosphorylation of fructose 6-phosphate to fructose 1,6-bisphosphate using ADP as the phosphate donor. In Thermococcus litoralis, this protein is ADP-specific phosphofructokinase.